Here is a 454-residue protein sequence, read N- to C-terminus: Probable xylan O-acetyltransferase 9 (454 aa).

Over 1–15 (MKAPPPPSPVAKRAR) the chain is Cytoplasmic. The chain crosses the membrane as a helical; Signal-anchor for type II membrane protein span at residues 16–36 (VSPFVFLLVLFLLLFSFLYGE). Residues 37–454 (DLKELLGSQA…ELLYTKLFYP (418 aa)) are Lumenal-facing. Disulfide bonds link cysteine 101/cysteine 152, cysteine 123/cysteine 188, cysteine 132/cysteine 435, and cysteine 352/cysteine 431. Positions 175–177 (GDS) match the GDS motif motif. The active-site Nucleophile is the serine 177. Residues asparagine 219, asparagine 293, and asparagine 394 are each glycosylated (N-linked (GlcNAc...) asparagine). Aspartate 430 functions as the Proton donor in the catalytic mechanism. The DXXH motif signature appears at 430 to 433 (DCVH). Histidine 433 acts as the Proton acceptor in catalysis.

Belongs to the PC-esterase family. TBL subfamily.

The protein resides in the golgi apparatus membrane. In terms of biological role, probable xylan acetyltransferase required for 2-O- and 3-O-monoacetylation of xylosyl residues in xylan. Possesses extremely low activity in vitro. The polypeptide is Probable xylan O-acetyltransferase 9 (Oryza sativa subsp. japonica (Rice)).